Here is a 504-residue protein sequence, read N- to C-terminus: WD repeat-containing protein 55 homolog (504 aa).

The segment covering 32–49 (QEVVNESDSEIGEYDLGD) has biased composition (acidic residues). The disordered stretch occupies residues 32 to 135 (QEVVNESDSE…NAFDMDEDDE (104 aa)). The span at 66-76 (DSISSDGSFNP) shows a compositional bias: polar residues. Residues 77 to 95 (NDEDSDTDSDDSMLDEPDE) show a composition bias toward acidic residues. Positions 114-124 (SGSSNRNQDSD) are enriched in polar residues. WD repeat units follow at residues 158–197 (KLED…NKLL), 202–241 (VHAK…LKKL), 245–283 (AHDD…SIFE), 286–325 (EIED…LYVQ), 328–367 (PYEE…YHCD), and 412–451 (QHNM…DFGD). Positions 484-504 (AKEDNNDNENDDATAGPSNTT) are disordered.

Belongs to the WD repeat WDR55 family.

The chain is WD repeat-containing protein 55 homolog from Drosophila willistoni (Fruit fly).